The chain runs to 569 residues: MPYRISRQAYAETYGPTTGDRLRLADTELILEVEKDFTVYGDEVKFGGGKVIRDGMGQSQTPRAGGAVDTVITNALILDWWGIVKADVGLKDGRIVGIGKAGNPDTQAGVTIVVGPGTEAIAGEGHILTAGGIDTHIHFICPQQIETALASGMTTLMGGGTGPATGTNATTCTPGAFHIGRMLQAAEGLPVNLGFFGKGNASTPEALEEQVRAGACGLKLHEDWGTTPATIDACLSVADRMDVQVCIHTDTLNEAGFVEDTIAAIKGRTIHTFHTEGAGGGHAPDIIKICGEANVLPSSTNPTRPYTRNTLEEHLDMLMVCHHLDPRIPEDVAFAESRIRRETIAAEDILHDLGAFSIIASDSQAMGRVGEVITRTFQTAHKMKVQRGALPQDSSRNDNHRLKRYIAKVTINPALAHGISSEVGSIETGKLADLVLWKPGFFGIRPEVVIKGGSIVWAQMGDANASIPTPGPVHGRPMFGAFGKALAPSCLTFVSEAAMDSDIQRHLGLERTCMAVKDTRSVGKSALKLNSALPKVSVDPQTYEVFADGELLTCEPAEVLPLAQRYLLL.

The Urease domain maps to 131–569 (GGIDTHIHFI…LPLAQRYLLL (439 aa)). Positions 136, 138, and 219 each coordinate Ni(2+). Residue lysine 219 is modified to N6-carboxylysine. Histidine 221 is a substrate binding site. 2 residues coordinate Ni(2+): histidine 248 and histidine 274. Histidine 322 serves as the catalytic Proton donor. Aspartate 362 lines the Ni(2+) pocket.

Belongs to the metallo-dependent hydrolases superfamily. Urease alpha subunit family. Heterotrimer of UreA (gamma), UreB (beta) and UreC (alpha) subunits. Three heterotrimers associate to form the active enzyme. Ni cation serves as cofactor. Post-translationally, carboxylation allows a single lysine to coordinate two nickel ions.

It is found in the cytoplasm. It carries out the reaction urea + 2 H2O + H(+) = hydrogencarbonate + 2 NH4(+). The protein operates within nitrogen metabolism; urea degradation; CO(2) and NH(3) from urea (urease route): step 1/1. The polypeptide is Urease subunit alpha (Synechococcus sp. (strain WH7805)).